We begin with the raw amino-acid sequence, 202 residues long: Large ribosomal subunit protein uL4 (202 aa).

Residues 42 to 52 (GTKAQKSRSQV) are compositionally biased toward polar residues. The tract at residues 42-70 (GTKAQKSRSQVSGTTKKSKKQKGGGARHG) is disordered.

Belongs to the universal ribosomal protein uL4 family. In terms of assembly, part of the 50S ribosomal subunit.

One of the primary rRNA binding proteins, this protein initially binds near the 5'-end of the 23S rRNA. It is important during the early stages of 50S assembly. It makes multiple contacts with different domains of the 23S rRNA in the assembled 50S subunit and ribosome. Its function is as follows. Forms part of the polypeptide exit tunnel. The protein is Large ribosomal subunit protein uL4 of Xylella fastidiosa (strain 9a5c).